A 375-amino-acid chain; its full sequence is Circadian-associated transcriptional repressor (375 aa).

Positions 1–32 are enriched in low complexity; it reads MDSPSSVSSYSSSSLSPSFSTSSVNSDFSFPS. Disordered stretches follow at residues 1–102, 192–218, and 351–375; these read MDSP…LNTQ, KSSS…AASP, and DREM…DPQP. Residues 33-46 are compositionally biased toward basic and acidic residues; that stretch reads DNEREGKGTHELRP.

In terms of assembly, interacts with BMAL1, PER2, CRY2, BHLHE41, HDAC1 NR3C1.

It localises to the nucleus. The protein localises to the PML body. Transcriptional repressor which forms a negative regulatory component of the circadian clock and acts independently of the circadian transcriptional repressors: CRY1, CRY2 and BHLHE41. In a histone deacetylase-dependent manner represses the transcriptional activator activity of the CLOCK-BMAL1 heterodimer. Abrogates the interaction of BMAL1 with the transcriptional coactivator CREBBP and can repress the histone acetyl-transferase activity of the CLOCK-BMAL1 heterodimer, reducing histone acetylation of its target genes. Rhythmically binds the E-box elements (5'-CACGTG-3') on circadian gene promoters and its occupancy shows circadian oscillation antiphasic to BMAL1. Interacts with the glucocorticoid receptor (NR3C1) and contributes to the repressive function in the glucocorticoid response. The polypeptide is Circadian-associated transcriptional repressor (Ciart) (Mus musculus (Mouse)).